A 119-amino-acid chain; its full sequence is Protein SPIRAL1 (119 aa).

The span at 1-11 (MGRGNSCGGGQ) shows a compositional bias: gly residues. Disordered stretches follow at residues 1-47 (MGRG…PPVT) and 85-105 (EGQNTGNFLTDRPSTKVHAAP). Positions 24–34 (APKPVPAPRPA) are enriched in pro residues.

It belongs to the SPIRAL1 family. In terms of processing, ubiquitinated. Upon salt-stress induction, it is subject to proteasome-dependent degradation. As to expression, ubiquitous. High expression was associated with tissues undergoing rapid cell expansion, including the root elongation zone, hypocotyls of dark grown-seedlings, and cotyledons of light-grown seedlings.

It is found in the cytoplasm. Its subcellular location is the cytoskeleton. The protein localises to the phragmoplast. The protein resides in the spindle. Functionally, required for directional control of cell elongation. Stabilizes growing ends of cortical microtubules and influences their dynamic properties. Acts redundantly with SP1Ls in maintaining the cortical microtubules organization essential for anisotropic cell growth. Plays a key role in salt stress-induced microtubules disassembly. The polypeptide is Protein SPIRAL1 (SPR1) (Arabidopsis thaliana (Mouse-ear cress)).